The chain runs to 32 residues: Photosystem II reaction center protein T (32 aa).

The chain crosses the membrane as a helical span at residues 3–23; the sequence is ALVYTFLLIGTLIVIFFAVFF.

Belongs to the PsbT family. In terms of assembly, PSII is composed of 1 copy each of membrane proteins PsbA, PsbB, PsbC, PsbD, PsbE, PsbF, PsbH, PsbI, PsbJ, PsbK, PsbL, PsbM, PsbT, PsbX, PsbY, PsbZ, Psb30/Ycf12, at least 3 peripheral proteins of the oxygen-evolving complex and a large number of cofactors. It forms dimeric complexes.

Its subcellular location is the plastid. It is found in the chloroplast thylakoid membrane. Functionally, found at the monomer-monomer interface of the photosystem II (PS II) dimer, plays a role in assembly and dimerization of PSII. PSII is a light-driven water plastoquinone oxidoreductase, using light energy to abstract electrons from H(2)O, generating a proton gradient subsequently used for ATP formation. This is Photosystem II reaction center protein T from Phaeodactylum tricornutum (strain CCAP 1055/1).